A 168-amino-acid polypeptide reads, in one-letter code: Small ribosomal subunit protein bS6 (168 aa).

The segment at 103–168 (RQAIAEEKEK…AAADKSDDNA (66 aa)) is disordered. Residues 106–115 (IAEEKEKKAE) are compositionally biased toward basic and acidic residues. Over residues 116-125 (GQAAADAAPA) the composition is skewed to low complexity.

It belongs to the bacterial ribosomal protein bS6 family.

Functionally, binds together with bS18 to 16S ribosomal RNA. This Desulfosudis oleivorans (strain DSM 6200 / JCM 39069 / Hxd3) (Desulfococcus oleovorans) protein is Small ribosomal subunit protein bS6.